Here is a 316-residue protein sequence, read N- to C-terminus: Glutathione synthetase (316 aa).

One can recognise an ATP-grasp domain in the interval 124–311 (NEKLAALLFP…IAGLLFDAIE (188 aa)). 151-208 (FVLAHGQAVLKPLDGMGGRSIFRSGTGDPNLNVILETLTDGGRKLTLAQRFIPDITAG) contacts ATP. Positions 282 and 284 each coordinate Mg(2+).

The protein belongs to the prokaryotic GSH synthase family. Mg(2+) serves as cofactor. It depends on Mn(2+) as a cofactor.

The enzyme catalyses gamma-L-glutamyl-L-cysteine + glycine + ATP = glutathione + ADP + phosphate + H(+). The protein operates within sulfur metabolism; glutathione biosynthesis; glutathione from L-cysteine and L-glutamate: step 2/2. The polypeptide is Glutathione synthetase (Xanthomonas campestris pv. campestris (strain ATCC 33913 / DSM 3586 / NCPPB 528 / LMG 568 / P 25)).